The following is an 86-amino-acid chain: Small ribosomal subunit protein uS15 (86 aa).

It belongs to the universal ribosomal protein uS15 family. Part of the 30S ribosomal subunit. Forms a bridge to the 50S subunit in the 70S ribosome, contacting the 23S rRNA.

In terms of biological role, one of the primary rRNA binding proteins, it binds directly to 16S rRNA where it helps nucleate assembly of the platform of the 30S subunit by binding and bridging several RNA helices of the 16S rRNA. Forms an intersubunit bridge (bridge B4) with the 23S rRNA of the 50S subunit in the ribosome. This Vesicomyosocius okutanii subsp. Calyptogena okutanii (strain HA) protein is Small ribosomal subunit protein uS15.